The primary structure comprises 96 residues: Evasin P1078 (96 aa).

Residues 1-28 (MAFNTITFLQWAVFVAILFNMNLHSASA) form the signal peptide. 3 disulfide bridges follow: Cys-48–Cys-67, Cys-52–Cys-69, and Cys-63–Cys-80. Asn-51 carries an N-linked (GlcNAc...) asparagine glycan. Asn-74 carries N-linked (GlcNAc...) asparagine glycosylation.

Its subcellular location is the secreted. Its function is as follows. Salivary chemokine-binding protein which binds to host chemokines CXCL1, CXCL2, CXCL3, CXCL5, CXCL6, CXCL11 and CXCL13. The sequence is that of Evasin P1078 from Ixodes ricinus (Common tick).